Reading from the N-terminus, the 203-residue chain is Molybdenum cofactor guanylyltransferase (203 aa).

Residues 12–14, Lys-25, Asn-53, Asp-71, and Asp-101 each bind GTP; that span reads LAG. A Mg(2+)-binding site is contributed by Asp-101.

This sequence belongs to the MobA family. Monomer. Mg(2+) serves as cofactor.

The protein localises to the cytoplasm. The enzyme catalyses Mo-molybdopterin + GTP + H(+) = Mo-molybdopterin guanine dinucleotide + diphosphate. Functionally, transfers a GMP moiety from GTP to Mo-molybdopterin (Mo-MPT) cofactor (Moco or molybdenum cofactor) to form Mo-molybdopterin guanine dinucleotide (Mo-MGD) cofactor. The polypeptide is Molybdenum cofactor guanylyltransferase (Methylibium petroleiphilum (strain ATCC BAA-1232 / LMG 22953 / PM1)).